We begin with the raw amino-acid sequence, 397 residues long: Odorant receptor 22b (397 aa).

Over 1–49 (MLSQFFPHIKEKPLSERVKSRDAFVYLDRVMWSFGWTVPENKRWDLHYK) the chain is Cytoplasmic. A helical membrane pass occupies residues 50 to 70 (LWSTFVTLLIFILLPISVSVE). Residues 71-85 (YIQRFKTFSAGEFLS) are Extracellular-facing. Residues 86–105 (SIQIGVNMYGSSFKSYLTMM) traverse the membrane as a helical segment. The Cytoplasmic segment spans residues 106–143 (GYKKRQEAKMSLDELDKRCVCDEERTIVHRHVALGNFC). Residues 144–164 (YIFYHIAYTSFLISNFLSFIM) traverse the membrane as a helical segment. The Extracellular portion of the chain corresponds to 165–194 (KRIHAWRMYFPYVDPEKQFYISSIAEVILR). A helical transmembrane segment spans residues 195–215 (GWAVFMDLCTDVCPLISMVIA). Over 216–268 (RCHITLLKQRLRNLRSEPGRTEDEYLKELADCVRDHRLILDYVDALRSVFSGT) the chain is Cytoplasmic. The chain crosses the membrane as a helical span at residues 269–289 (IFVQFLLIGIVLGLSMINIMF). Residues 290–295 (FSTLST) lie on the Extracellular side of the membrane. The chain crosses the membrane as a helical span at residues 296–316 (GVAVVLFMSCVSMQTFPFCYL). The Cytoplasmic portion of the chain corresponds to 317–347 (CNMIMDDCQEMADSLFQSDWTSADRRYKSTL). Residues 348–368 (VYFLHNLQQPIILTAGGVFPI) form a helical membrane-spanning segment. At 369–397 (SMQTNLNMVKLAFTVVTIVKQFNLAEKFQ) the chain is on the extracellular side.

Belongs to the insect chemoreceptor superfamily. Heteromeric odorant receptor channel (TC 1.A.69) family. Or2a subfamily. As to quaternary structure, interacts with Orco, via conserved C-terminal cytoplasmic loops. Complexes exist early in the endomembrane system in olfactory sensory neurons (OSNs), coupling these complexes to the conserved ciliary trafficking pathway. Expressed with Orco in 20-22 sensory neurons on the medial-proximal edge of the antenna. This expression pattern matches the distribution of the large sensilla basiconica. Expression is first seen at 60 hours APF in a subset of cells restricted to a subregion of the developing antenna. Expression continues throughout antennal development. Expressed in the ab3A neuron which responds to ethyl butyrate.

The protein localises to the cell membrane. Functionally, odorant receptor which mediates acceptance or avoidance behavior, depending on its substrates. The odorant receptor repertoire encodes a large collection of odor stimuli that vary widely in identity, intensity, and duration. Involved in the behavioral responses to esters. Complexes with Orco to form odorant-sensing units, providing sensitive and prolonged odorant signaling and calcium permeability. They are necessary and sufficient to promote functional reconstitution of odor-evoked signaling in sensory neurons that normally respond only to carbon dioxide. The chain is Odorant receptor 22b (Or22b) from Drosophila melanogaster (Fruit fly).